The sequence spans 53 residues: Rubredoxin (53 aa).

Residues 1-53 (MTKYVCTVCGYVYDPEVGDPDNNINPGTSFQDIPEDWVCPLCGVGKDQFEEEA) enclose the Rubredoxin-like domain. The Fe cation site is built by cysteine 6, cysteine 9, cysteine 39, and cysteine 42.

This sequence belongs to the rubredoxin family. It depends on Fe(3+) as a cofactor.

In terms of biological role, rubredoxin is a small nonheme, iron protein lacking acid-labile sulfide. Its single Fe, chelated to 4 Cys, functions as an electron acceptor and may also stabilize the conformation of the molecule. In Acetoanaerobium sticklandii (strain ATCC 12662 / DSM 519 / JCM 1433 / CCUG 9281 / NCIMB 10654 / HF) (Clostridium sticklandii), this protein is Rubredoxin.